A 471-amino-acid chain; its full sequence is UDP-N-acetylmuramoylalanine--D-glutamate ligase (471 aa).

135–141 (GTNGKTT) is an ATP binding site.

This sequence belongs to the MurCDEF family.

It is found in the cytoplasm. The enzyme catalyses UDP-N-acetyl-alpha-D-muramoyl-L-alanine + D-glutamate + ATP = UDP-N-acetyl-alpha-D-muramoyl-L-alanyl-D-glutamate + ADP + phosphate + H(+). The protein operates within cell wall biogenesis; peptidoglycan biosynthesis. Its function is as follows. Cell wall formation. Catalyzes the addition of glutamate to the nucleotide precursor UDP-N-acetylmuramoyl-L-alanine (UMA). The sequence is that of UDP-N-acetylmuramoylalanine--D-glutamate ligase from Frankia casuarinae (strain DSM 45818 / CECT 9043 / HFP020203 / CcI3).